A 376-amino-acid polypeptide reads, in one-letter code: Glutamate 5-kinase (376 aa).

Lys-15 serves as a coordination point for ATP. Residues Ser-56, Asp-143, and Asn-155 each contribute to the substrate site. 175–176 is a binding site for ATP; the sequence is SD. A PUA domain is found at 281-358; the sequence is KGTLTIDAGA…PDVMMILGIT (78 aa).

It belongs to the glutamate 5-kinase family.

It is found in the cytoplasm. It carries out the reaction L-glutamate + ATP = L-glutamyl 5-phosphate + ADP. The protein operates within amino-acid biosynthesis; L-proline biosynthesis; L-glutamate 5-semialdehyde from L-glutamate: step 1/2. In terms of biological role, catalyzes the transfer of a phosphate group to glutamate to form L-glutamate 5-phosphate. In Rhodopseudomonas palustris (strain ATCC BAA-98 / CGA009), this protein is Glutamate 5-kinase.